Consider the following 762-residue polypeptide: Probable inorganic carbon transporter subunit DabA (762 aa).

4 residues coordinate Zn(2+): C279, D281, H461, and C476.

It belongs to the inorganic carbon transporter (TC 9.A.2) DabA family. Forms a complex with DabB. The cofactor is Zn(2+).

Its subcellular location is the cell inner membrane. Functionally, part of an energy-coupled inorganic carbon pump. The sequence is that of Probable inorganic carbon transporter subunit DabA from Legionella pneumophila (strain Corby).